Reading from the N-terminus, the 256-residue chain is Type III pantothenate kinase (256 aa).

Asp6–Tyr13 is an ATP binding site. Residues Tyr99 and Gly106–Arg109 contribute to the substrate site. Asp108 functions as the Proton acceptor in the catalytic mechanism. Asp129 contributes to the K(+) binding site. Position 132 (Thr132) interacts with ATP. A substrate-binding site is contributed by Thr184.

It belongs to the type III pantothenate kinase family. Homodimer. It depends on NH4(+) as a cofactor. K(+) serves as cofactor.

It localises to the cytoplasm. It carries out the reaction (R)-pantothenate + ATP = (R)-4'-phosphopantothenate + ADP + H(+). The protein operates within cofactor biosynthesis; coenzyme A biosynthesis; CoA from (R)-pantothenate: step 1/5. Catalyzes the phosphorylation of pantothenate (Pan), the first step in CoA biosynthesis. This is Type III pantothenate kinase from Legionella pneumophila (strain Corby).